The following is a 192-amino-acid chain: Na(+)-translocating ferredoxin:NAD(+) oxidoreductase complex subunit A (192 aa).

Helical transmembrane passes span 4-24, 38-58, 71-91, 101-121, 133-153, and 169-189; these read IFIM…FLGI, VGMG…TYVV, LQTI…EMII, ALGV…VALI, IFNG…FAGI, and FPIA…FSGM.

The protein belongs to the NqrDE/RnfAE family. In terms of assembly, the complex is composed of six subunits: RnfA, RnfB, RnfC, RnfD, RnfE and RnfG.

Its subcellular location is the cell membrane. The enzyme catalyses 2 reduced [2Fe-2S]-[ferredoxin] + Na(+)(in) + NAD(+) + H(+) = 2 oxidized [2Fe-2S]-[ferredoxin] + Na(+)(out) + NADH. Its function is as follows. Part of a membrane-bound complex that couples electron transfer with translocation of ions across the membrane. Couples electron transfer from reduced ferredoxin to NAD(+) with electrogenic movement of Na(+) out of the cell. Involved in caffeate respiration. The chain is Na(+)-translocating ferredoxin:NAD(+) oxidoreductase complex subunit A from Acetobacterium woodii (strain ATCC 29683 / DSM 1030 / JCM 2381 / KCTC 1655 / WB1).